The following is an 80-amino-acid chain: MKADIHPNYRDVVFHDVTSDFKILTRSTMATKETIQWEDGNEYPLVKVEISSASHPFYTGKHKVIDTSGRIDKFQKRYAR.

This sequence belongs to the bacterial ribosomal protein bL31 family. Type B subfamily. As to quaternary structure, part of the 50S ribosomal subunit.

This chain is Large ribosomal subunit protein bL31B, found in Stenotrophomonas maltophilia (strain K279a).